A 1158-amino-acid polypeptide reads, in one-letter code: ATP-dependent helicase/deoxyribonuclease subunit B (1158 aa).

Residues 1-275 (MTLHAYLGRA…QYFNQLYRFN (275 aa)) form the UvrD-like helicase ATP-binding domain. 8–15 (GRAGTGKS) lines the ATP pocket. The 315-residue stretch at 269–583 (NQLYRFNNQD…SIGTMDLAKV (315 aa)) folds into the UvrD-like helicase C-terminal domain. [4Fe-4S] cluster is bound by residues cysteine 784, cysteine 1112, cysteine 1115, and cysteine 1121.

It belongs to the helicase family. AddB/RexB type 1 subfamily. Heterodimer of AddA and AddB. Mg(2+) is required as a cofactor. Requires [4Fe-4S] cluster as cofactor.

The heterodimer acts as both an ATP-dependent DNA helicase and an ATP-dependent, dual-direction single-stranded exonuclease. Recognizes the chi site generating a DNA molecule suitable for the initiation of homologous recombination. The AddB subunit has 5' -&gt; 3' nuclease activity but not helicase activity. The chain is ATP-dependent helicase/deoxyribonuclease subunit B from Staphylococcus aureus (strain USA300).